Consider the following 136-residue polypeptide: Large ribosomal subunit protein uL16 (136 aa).

Belongs to the universal ribosomal protein uL16 family. As to quaternary structure, part of the 50S ribosomal subunit.

In terms of biological role, binds 23S rRNA and is also seen to make contacts with the A and possibly P site tRNAs. The protein is Large ribosomal subunit protein uL16 of Rickettsia prowazekii (strain Madrid E).